The sequence spans 280 residues: Urease accessory protein UreD 1 (280 aa).

This sequence belongs to the UreD family. As to quaternary structure, ureD, UreF and UreG form a complex that acts as a GTP-hydrolysis-dependent molecular chaperone, activating the urease apoprotein by helping to assemble the nickel containing metallocenter of UreC. The UreE protein probably delivers the nickel.

It is found in the cytoplasm. In terms of biological role, required for maturation of urease via the functional incorporation of the urease nickel metallocenter. The polypeptide is Urease accessory protein UreD 1 (Brucella abortus biovar 1 (strain 9-941)).